The chain runs to 294 residues: N-acetylmuramic acid 6-phosphate etherase (294 aa).

An SIS domain is found at 54-217; sequence VIKSFEEEGR…STASMIGVGK (164 aa). The active-site Proton donor is Glu82. Glu113 is an active-site residue.

The protein belongs to the GCKR-like family. MurNAc-6-P etherase subfamily. In terms of assembly, homodimer.

It catalyses the reaction N-acetyl-D-muramate 6-phosphate + H2O = N-acetyl-D-glucosamine 6-phosphate + (R)-lactate. Its pathway is amino-sugar metabolism; N-acetylmuramate degradation. Specifically catalyzes the cleavage of the D-lactyl ether substituent of MurNAc 6-phosphate, producing GlcNAc 6-phosphate and D-lactate. In Bacillus cereus (strain ATCC 14579 / DSM 31 / CCUG 7414 / JCM 2152 / NBRC 15305 / NCIMB 9373 / NCTC 2599 / NRRL B-3711), this protein is N-acetylmuramic acid 6-phosphate etherase.